The primary structure comprises 250 residues: Probable replication-associated protein repA2 (250 aa).

Belongs to the IncFII RepA family.

Functionally, this protein is essential for plasmid replication; it is involved in copy control functions. The protein is Probable replication-associated protein repA2 (repA2) of Buchnera aphidicola subsp. Schizaphis graminum (strain Sg).